Consider the following 144-residue polypeptide: 3-dehydroquinate dehydratase (144 aa).

Residue Tyr-24 is the Proton acceptor of the active site. Substrate contacts are provided by Asn-73, His-79, and Asp-86. His-99 acts as the Proton donor in catalysis. Residues 100 to 101 (LS) and Arg-110 contribute to the substrate site.

The protein belongs to the type-II 3-dehydroquinase family. In terms of assembly, homododecamer.

It catalyses the reaction 3-dehydroquinate = 3-dehydroshikimate + H2O. It functions in the pathway metabolic intermediate biosynthesis; chorismate biosynthesis; chorismate from D-erythrose 4-phosphate and phosphoenolpyruvate: step 3/7. Its function is as follows. Catalyzes a trans-dehydration via an enolate intermediate. The polypeptide is 3-dehydroquinate dehydratase (Shewanella sp. (strain MR-4)).